A 272-amino-acid chain; its full sequence is Ribonuclease HII (272 aa).

Residues K87–L272 enclose the RNase H type-2 domain. Residues D93, E94, and D188 each coordinate a divalent metal cation.

This sequence belongs to the RNase HII family. It depends on Mn(2+) as a cofactor. The cofactor is Mg(2+).

It is found in the cytoplasm. The enzyme catalyses Endonucleolytic cleavage to 5'-phosphomonoester.. Its function is as follows. Endonuclease that specifically degrades the RNA of RNA-DNA hybrids. The chain is Ribonuclease HII from Clostridium perfringens (strain 13 / Type A).